The chain runs to 1582 residues: ATP-binding cassette sub-family C member 8 (1582 aa).

The Extracellular segment spans residues 1 to 30; it reads MPLAFCGTENHSAAYRVDQGVLNNGCFVDA. An intrachain disulfide couples C6 to C26. A glycan (N-linked (GlcNAc...) asparagine) is linked at N10. A helical transmembrane segment spans residues 31–47; that stretch reads LNVVPHVFLLFITFPIL. Over 48-72 the chain is Cytoplasmic; the sequence is FIGWGSQSSKVHIHHSTWLHFPGHN. A helical transmembrane segment spans residues 73–89; that stretch reads LRWILTFILLFVLVCEI. Topologically, residues 90 to 106 are extracellular; it reads AEGILSDGVTESRHLHL. Residues 107 to 123 form a helical membrane-spanning segment; that stretch reads YMPAGMAFMAAITSVVY. At 124-136 the chain is on the cytoplasmic side; the sequence is YHNIETSNFPKLL. A helical transmembrane segment spans residues 137–153; the sequence is IALLIYWTLAFITKTIK. At 154–169 the chain is on the extracellular side; that stretch reads FVKFYDHAIGFSQLRF. The chain crosses the membrane as a helical span at residues 170-186; it reads CLTGLLVILYGMLLLVE. At 187 to 303 the chain is on the cytoplasmic side; sequence VNVIRVRRYV…AFGRRLVLSS (117 aa). Positions 299-602 constitute an ABC transmembrane type-1 1 domain; that stretch reads LVLSSTFRIL…LSSVVRSTVK (304 aa). The chain crosses the membrane as a helical span at residues 304–319; that stretch reads TFRILADLLGFAGPLC. Topologically, residues 320 to 356 are extracellular; it reads IFGIVDHLGKENHVFQPKTQFLGVYFVSSQEFLGNAY. A helical membrane pass occupies residues 357 to 372; it reads VLAVLLFLALLLQRTF. At 373–438 the chain is on the cytoplasmic side; the sequence is LQASYYVAIE…MWFFFLCPNL (66 aa). A helical membrane pass occupies residues 439 to 454; it reads WAMPVQIIVGVILLYY. The Extracellular segment spans residues 455–460; it reads ILGVSA. The chain crosses the membrane as a helical span at residues 461 to 473; that stretch reads LIGAAVIILLAPV. At 474 to 541 the chain is on the cytoplasmic side; sequence QYFVATKLSQ…SLRAFAVYTS (68 aa). A helical membrane pass occupies residues 542-557; that stretch reads ISIFMNTAIPIAAVLI. The Extracellular portion of the chain corresponds to 558–576; it reads TFVGHVSFFKESDFSPSVA. The helical transmembrane segment at 577-592 threads the bilayer; sequence FASLSLFHILVTPLFL. Residues 593 to 1013 lie on the Cytoplasmic side of the membrane; the sequence is LSSVVRSTVK…YLSSAGILLL (421 aa). The region spanning 679–930 is the ABC transporter 1 domain; the sequence is VQIIGGFFTW…ECQLFEHWKT (252 aa). Positions 688, 716, 720, and 721 each coordinate ATP. S720 is a binding site for Mg(2+). Residues 741–768 are disordered; that stretch reads SSLPDSEGEDPSNPERETAADSDARSRG. Basic and acidic residues predominate over residues 753 to 766; it reads NPERETAADSDARS. Q775 provides a ligand contact to Mg(2+). A compositionally biased stretch (basic and acidic residues) spans 939-950; sequence LEKETVMERKAP. The tract at residues 939-962 is disordered; that stretch reads LEKETVMERKAPEPSQGLPRAMSS. The region spanning 1013–1307 is the ABC transmembrane type-1 2 domain; that stretch reads LSLLVFSQLL…MVRNLADMEI (295 aa). Residues 1014 to 1031 traverse the membrane as a helical segment; that stretch reads SLLVFSQLLKHMVLVAID. Over 1032 to 1067 the chain is Extracellular; that stretch reads YWLAKWTDSALVLSPAARNCSLSQECALDQSVYAMV. N1050 carries an N-linked (GlcNAc...) asparagine glycan. The chain crosses the membrane as a helical span at residues 1068 to 1084; the sequence is FTVLCSLGIALCLVTSV. The Cytoplasmic portion of the chain corresponds to 1085–1143; the sequence is TVEWTGLKVAKRLHRSLLNRIILAPMRFFETTPLGSILNRFSSDCNTIDQHIPSTLECL. A helical transmembrane segment spans residues 1144-1161; that stretch reads SRSTLLCVSALAVISYVT. Residue P1162 is a topological domain, extracellular. The helical transmembrane segment at 1163–1175 threads the bilayer; that stretch reads VFLVALLPLAVVC. The Cytoplasmic segment spans residues 1176–1249; that stretch reads YFIQKYFRVA…FLTAANRWLE (74 aa). A helical transmembrane segment spans residues 1250–1265; the sequence is VRMEYIGACVVLIAAA. The Extracellular portion of the chain corresponds to 1266 to 1281; sequence TSISNSLHRELSAGLV. A helical membrane pass occupies residues 1282–1297; that stretch reads GLGLTYALMVSNYLNW. Residues 1298–1582 lie on the Cytoplasmic side of the membrane; it reads MVRNLADMEI…VFASFVRADK (285 aa). Residues 1345–1579 enclose the ABC transporter 2 domain; it reads IQIQNLSVRY…KDSVFASFVR (235 aa). ADP is bound by residues T1381, G1382, G1384, K1385, S1386, and S1387. S1483 is an ATP binding site.

It belongs to the ABC transporter superfamily. ABCC family. Conjugate transporter (TC 3.A.1.208) subfamily. As to quaternary structure, forms an heterooctamer with KCNJ11; four ABCC8/SUR1 molecules interact with one KCNJ11 homotetramer.

It localises to the cell membrane. Its activity is regulated as follows. KATP channels are regulated by cytoplasmic ATP/ADP ratios; ATP inhibits the channel by closing the pore, while ADP activates the channel. Activated by phosphatidylinositol 4,5-biphosphate (PtdIns(4,5)P2). Functionally, regulator subunit of pancreatic ATP-sensitive potassium channel (KATP), playing a major role in the regulation of insulin release. In pancreatic cells, it forms KATP channels with KCNJ11; KCNJ11 forms the channel pore while ABCC8 is required for activation and regulation. The sequence is that of ATP-binding cassette sub-family C member 8 (Abcc8) from Rattus norvegicus (Rat).